The chain runs to 364 residues: UDP-N-acetylglucosamine--N-acetylmuramyl-(pentapeptide) pyrophosphoryl-undecaprenol N-acetylglucosamine transferase (364 aa).

UDP-N-acetyl-alpha-D-glucosamine contacts are provided by residues Thr10 to Gly12, Asn124, Ser195, Ile250, and Gln295.

Belongs to the glycosyltransferase 28 family. MurG subfamily.

It localises to the cell membrane. The catalysed reaction is Mur2Ac(oyl-L-Ala-gamma-D-Glu-L-Lys-D-Ala-D-Ala)-di-trans,octa-cis-undecaprenyl diphosphate + UDP-N-acetyl-alpha-D-glucosamine = beta-D-GlcNAc-(1-&gt;4)-Mur2Ac(oyl-L-Ala-gamma-D-Glu-L-Lys-D-Ala-D-Ala)-di-trans,octa-cis-undecaprenyl diphosphate + UDP + H(+). The protein operates within cell wall biogenesis; peptidoglycan biosynthesis. In terms of biological role, cell wall formation. Catalyzes the transfer of a GlcNAc subunit on undecaprenyl-pyrophosphoryl-MurNAc-pentapeptide (lipid intermediate I) to form undecaprenyl-pyrophosphoryl-MurNAc-(pentapeptide)GlcNAc (lipid intermediate II). The sequence is that of UDP-N-acetylglucosamine--N-acetylmuramyl-(pentapeptide) pyrophosphoryl-undecaprenol N-acetylglucosamine transferase from Levilactobacillus brevis (strain ATCC 367 / BCRC 12310 / CIP 105137 / JCM 1170 / LMG 11437 / NCIMB 947 / NCTC 947) (Lactobacillus brevis).